A 237-amino-acid polypeptide reads, in one-letter code: ATP-dependent dethiobiotin synthetase BioD (237 aa).

12–17 (DAGKTL) serves as a coordination point for ATP. Position 16 (threonine 16) interacts with Mg(2+). The active site involves lysine 37. Residue serine 41 participates in substrate binding. Residues aspartate 54, 116-119 (EGAG), and 213-215 (PRL) contribute to the ATP site. Positions 54 and 116 each coordinate Mg(2+).

It belongs to the dethiobiotin synthetase family. As to quaternary structure, homodimer. Mg(2+) is required as a cofactor.

The protein resides in the cytoplasm. The catalysed reaction is (7R,8S)-7,8-diammoniononanoate + CO2 + ATP = (4R,5S)-dethiobiotin + ADP + phosphate + 3 H(+). It functions in the pathway cofactor biosynthesis; biotin biosynthesis; biotin from 7,8-diaminononanoate: step 1/2. Functionally, catalyzes a mechanistically unusual reaction, the ATP-dependent insertion of CO2 between the N7 and N8 nitrogen atoms of 7,8-diaminopelargonic acid (DAPA, also called 7,8-diammoniononanoate) to form a ureido ring. The protein is ATP-dependent dethiobiotin synthetase BioD of Chromohalobacter salexigens (strain ATCC BAA-138 / DSM 3043 / CIP 106854 / NCIMB 13768 / 1H11).